We begin with the raw amino-acid sequence, 588 residues long: MHSMISSVDVKSEVPMGLEPISPLDLRTDLRMMMPVVDPVVREKQLQQELLLIQQQQQIQKQLLIAEFQKQHENLTRQHQAQLQEHIKELLAIKQQQELLEKEQKLEQQRQEQEVERHRREQQLPPLRGKDRGRERAVASTEVKQKLQEFLLSKSATKDTPTNGKNHSVGRHPKLWYTAAHHTSLDQSSPPLSGTSPSYKYTLPGAQDSKDDFPLRKTASEPNLKVRSRLKQKVAERRSSPLLRRKDGNLVTSFKKRVFEVAESSVSSSSPGSGPSSPNNGPAGNVTENEASALPPTPHPEQLVPQQRILIHEDSMNLLSLYTSPSLPNITLGLPAVPSPLNASNSLKDKQKCETQMLRQGVPLPSQYGSSIAASSSHVHVAMEGKPNSSHQALLQHLLLKEQMRQQKLLVAGGVPLHPQSPLATKERISPGIRGTHKLPRHRPLNRTQSAPLPQSTLAQLVIQQQHQQFLEKQKQYQQQIHMNKLLSKSIEQLKQPGSHLEEAEEELQGDQSMEDRAASKDNSARSDSSACVEDTLGQVGAVKVKEEPVDSDEDAQIQEMECGEQAAFMQQVIGKDLAPGFVIKVII.

S22 carries the post-translational modification Phosphoserine. The tract at residues 23–27 (PLDLR) is interaction with CTBP1. A compositionally biased stretch (basic and acidic residues) spans 110–147 (RQEQEVERHRREQQLPPLRGKDRGRERAVASTEVKQKL). 3 disordered regions span residues 110–170 (RQEQ…HSVG), 183–242 (TSLD…SSPL), and 264–301 (SSVS…PHPE). Positions 136–154 (RAVASTEVKQKLQEFLLSK) are interaction with MEF2. Polar residues-rich tracts occupy residues 154–166 (KSAT…NGKN) and 185–199 (LDQS…SPSY). Residues 175–343 (LWYTAAHHTS…LPAVPSPLNA (169 aa)) form an interaction with MAPK10 region. Residues 208–219 (DSKDDFPLRKTA) are compositionally biased toward basic and acidic residues. The interaction with ETV6 stretch occupies residues 218–261 (TASEPNLKVRSRLKQKVAERRSSPLLRRKDGNLVTSFKKRVFEV). S220 bears the Phosphoserine mark. A compositionally biased stretch (basic and acidic residues) spans 233–242 (KVAERRSSPL). S240 is subject to Phosphoserine; by DYRK1B. Residues 264-284 (SSVSSSSPGSGPSSPNNGPAG) show a composition bias toward low complexity. The residue at position 450 (S450) is a Phosphoserine. The segment at 493–533 (QLKQPGSHLEEAEEELQGDQSMEDRAASKDNSARSDSSACV) is disordered. Basic and acidic residues predominate over residues 514–525 (MEDRAASKDNSA). S552 is subject to Phosphoserine.

It belongs to the histone deacetylase family. HD type 2 subfamily. Homodimer. Interacts with ETV6. Interacts with MEF2, HDAC1, HDAC3, HDAC4, HDAC5, CTBP1 and MAPK10. The phosphorylated form interacts with 14-3-3. Interacts with FOXP3 in the absence of T-cell stimulation. In terms of processing, sumoylated. Phosphorylated on Ser-220 and Ser-450; which promotes 14-3-3-binding, impairs interaction with MEF2, and antagonizes antimyogenic activity. Phosphorylated on Ser-240 by DYRK1B; which impairs nuclear accumulation. Phosphorylated by the PKC kinases PKN1 and PKN2, impairing nuclear import. In terms of tissue distribution, expressed at high levels in heart, brain and spleen. Expressed in skeletal muscle.

It localises to the nucleus. The enzyme catalyses N(6)-acetyl-L-lysyl-[histone] + H2O = L-lysyl-[histone] + acetate. In terms of biological role, devoided of intrinsic deacetylase activity, promotes the deacetylation of lysine residues on the N-terminal part of the core histones (H2A, H2B, H3 and H4) by recruiting HDAC1 and HDAC3. Histone deacetylation gives a tag for epigenetic repression and plays an important role in transcriptional regulation, cell cycle progression and developmental events. Represses MEF2-dependent transcription, inhibits skeletal myogenesis and may be involved in heart development. Protects neurons from apoptosis, both by inhibiting JUN phosphorylation by MAPK10 and by repressing JUN transcription via HDAC1 recruitment to JUN promoter. This Mus musculus (Mouse) protein is Histone deacetylase 9 (Hdac9).